Reading from the N-terminus, the 578-residue chain is Matrix metalloproteinase-17 (578 aa).

2 disordered regions span residues 1–22 (MGRR…PGPG) and 107–133 (PRCS…TKWS). The signal sequence occupies residues 1–39 (MGRRPRGPGSPRGPGPPRPGPGLPPLLLVLALAAHGGCA). Positions 11 to 22 (PRGPGPPRPGPG) are enriched in pro residues. The propeptide occupies 40 to 124 (APAPRAEDLS…PPGAQSRRKR (85 aa)). Residues 107–114 (PRCSLPDL) carry the Cysteine switch motif. Cys109 lines the Zn(2+) pocket. The N-linked (GlcNAc...) asparagine glycan is linked to Asn136. His247 serves as a coordination point for Zn(2+). The active site involves Glu248. Residues His251 and His257 each contribute to the Zn(2+) site. Positions 301–334 (PTAQLDTPEPEEPPLLPEPPNNRSSTPPQKDVPH) are disordered. A glycan (N-linked (GlcNAc...) asparagine) is linked at Asn322. Hemopexin repeat units lie at residues 333–382 (PHRC…WRGL), 386–432 (LDSV…SLPP), 436–479 (DAVF…WRGV), and 480–527 (PSML…WLVC). A disulfide bond links Cys336 and Cys527. A lipid anchor (GPI-anchor amidated serine) is attached at Ser558. A propeptide spans 559–578 (DAHRLALPSLLLLTPLLWGL) (removed in mature form).

Belongs to the peptidase M10A family. Zn(2+) is required as a cofactor. Ca(2+) serves as cofactor. In terms of processing, the precursor is cleaved by a furin endopeptidase. In terms of tissue distribution, expressed by monocytes and macrophages.

The protein resides in the cell membrane. It is found in the secreted. Its subcellular location is the extracellular space. The protein localises to the extracellular matrix. Its function is as follows. Endopeptidase that degrades various components of the extracellular matrix, such as fibrin. May be involved in the activation of membrane-bound precursors of growth factors or inflammatory mediators, such as tumor necrosis factor-alpha. May also be involved in tumoral process. Not obvious if able to proteolytically activate progelatinase A. Does not hydrolyze collagen types I, II, III, IV and V, gelatin, fibronectin, laminin, decorin nor alpha1-antitrypsin. In Mus musculus (Mouse), this protein is Matrix metalloproteinase-17 (Mmp17).